The chain runs to 201 residues: Holliday junction branch migration complex subunit RuvA (201 aa).

The segment at 1-63 (MIEYIKGEIA…EDAYVLYGFA (63 aa)) is domain I. The segment at 64-142 (DKQERELFLL…TGAMAATAVG (79 aa)) is domain II. Positions 143–153 (GAAGALLPAMN) are flexible linker. Residues 153–201 (NAEVQEEAIAALTMLGFAAAPSQKAVLAILKEEPDAPVEKVIKLALKRL) form a domain III region.

The protein belongs to the RuvA family. Homotetramer. Forms an RuvA(8)-RuvB(12)-Holliday junction (HJ) complex. HJ DNA is sandwiched between 2 RuvA tetramers; dsDNA enters through RuvA and exits via RuvB. An RuvB hexamer assembles on each DNA strand where it exits the tetramer. Each RuvB hexamer is contacted by two RuvA subunits (via domain III) on 2 adjacent RuvB subunits; this complex drives branch migration. In the full resolvosome a probable DNA-RuvA(4)-RuvB(12)-RuvC(2) complex forms which resolves the HJ.

The protein resides in the cytoplasm. In terms of biological role, the RuvA-RuvB-RuvC complex processes Holliday junction (HJ) DNA during genetic recombination and DNA repair, while the RuvA-RuvB complex plays an important role in the rescue of blocked DNA replication forks via replication fork reversal (RFR). RuvA specifically binds to HJ cruciform DNA, conferring on it an open structure. The RuvB hexamer acts as an ATP-dependent pump, pulling dsDNA into and through the RuvAB complex. HJ branch migration allows RuvC to scan DNA until it finds its consensus sequence, where it cleaves and resolves the cruciform DNA. The sequence is that of Holliday junction branch migration complex subunit RuvA from Bacteroides fragilis (strain ATCC 25285 / DSM 2151 / CCUG 4856 / JCM 11019 / LMG 10263 / NCTC 9343 / Onslow / VPI 2553 / EN-2).